Consider the following 82-residue polypeptide: Small ribosomal subunit protein bS18 (82 aa).

The protein belongs to the bacterial ribosomal protein bS18 family. In terms of assembly, part of the 30S ribosomal subunit. Forms a tight heterodimer with protein bS6.

Its function is as follows. Binds as a heterodimer with protein bS6 to the central domain of the 16S rRNA, where it helps stabilize the platform of the 30S subunit. This is Small ribosomal subunit protein bS18 from Chlamydia felis (strain Fe/C-56) (Chlamydophila felis).